A 130-amino-acid polypeptide reads, in one-letter code: Sulfurtransferase TusD (130 aa).

Cysteine 80 functions as the Cysteine persulfide intermediate in the catalytic mechanism.

The protein belongs to the DsrE/TusD family. As to quaternary structure, heterohexamer, formed by a dimer of trimers. The hexameric TusBCD complex contains 2 copies each of TusB, TusC and TusD. The TusBCD complex interacts with TusE.

Its subcellular location is the cytoplasm. Functionally, part of a sulfur-relay system required for 2-thiolation of 5-methylaminomethyl-2-thiouridine (mnm(5)s(2)U) at tRNA wobble positions. Accepts sulfur from TusA and transfers it in turn to TusE. This is Sulfurtransferase TusD from Sodalis glossinidius (strain morsitans).